A 504-amino-acid chain; its full sequence is Protein phosphatase 1J (504 aa).

Disordered regions lie at residues 1-102 and 194-217; these read MLNR…RLPW and PLCLPSTPGTPGVSSPSQLVSPQS. Low complexity predominate over residues 14–23; it reads SSSGTSSQRS. Residue threonine 41 is modified to Phosphothreonine. The segment covering 59–73 has biased composition (polar residues); sequence TAETPVSFSRPTFLQ. Phosphoserine is present on residues serine 65 and serine 75. The 394-residue stretch at 103–496 folds into the PPM-type phosphatase domain; the sequence is STGYAEVINA…DDISVFVIPL (394 aa). A compositionally biased stretch (low complexity) spans 197 to 217; sequence LPSTPGTPGVSSPSQLVSPQS.

Belongs to the PP2C family. As to quaternary structure, interacts with UBE2I/UBC9.

It carries out the reaction O-phospho-L-seryl-[protein] + H2O = L-seryl-[protein] + phosphate. It catalyses the reaction O-phospho-L-threonyl-[protein] + H2O = L-threonyl-[protein] + phosphate. This Rattus norvegicus (Rat) protein is Protein phosphatase 1J (Ppm1j).